A 246-amino-acid polypeptide reads, in one-letter code: MKLIIGVITLFPQMFDALKSGVIGRALKQDRLTLSFWNPRDYATDPHRTVDDRPYGGGPGMVMKFEPLALALKAAKAQLGENTKVIHLTPQGKLLTQAIVREKIHASPLILLAGRYEGIDERLIEAEVDEEWSIGDYILSGGELPAMVLIDAMTRLLPGVLGHKDSASQDSFTAGLLDYSHYTRPEKIADRPVPSVLLSGDHEAISRWRLKQSLGRTWQRRQDLIKRRSLSENEQRLLDEFFEESS.

Residues glycine 114 and 134–139 (IGDYIL) contribute to the S-adenosyl-L-methionine site.

Belongs to the RNA methyltransferase TrmD family. Homodimer.

The protein localises to the cytoplasm. It carries out the reaction guanosine(37) in tRNA + S-adenosyl-L-methionine = N(1)-methylguanosine(37) in tRNA + S-adenosyl-L-homocysteine + H(+). Specifically methylates guanosine-37 in various tRNAs. This Coxiella burnetii (strain CbuG_Q212) (Coxiella burnetii (strain Q212)) protein is tRNA (guanine-N(1)-)-methyltransferase.